Here is a 273-residue protein sequence, read N- to C-terminus: Histone H1.2 (273 aa).

The segment at 1–63 is disordered; the sequence is MSIEEENVPT…TKKKTTSSHP (63 aa). Ser2 carries the post-translational modification N-acetylserine. The residue at position 14 (Ser14) is a Phosphoserine. Residues 33–59 are compositionally biased toward basic residues; that stretch reads GKSKKTTTAKATKKPVKAAAPTKKKTT. Residues 61-130 form the H15 domain; the sequence is SHPTYEEMIK…KVKASFKIPS (70 aa). Glycyl lysine isopeptide (Lys-Gly) (interchain with G-Cter in ubiquitin) cross-links involve residues Lys156 and Lys165. Composition is skewed to low complexity over residues 193 to 216 and 237 to 256; these read KVTAAKPKSKSVAAVSKTKAVAAK and KKVAAPAKKVAVTKKAPAKS. The interval 193–273 is disordered; that stretch reads KVTAAKPKSK…KRASTRKAKK (81 aa). Basic residues predominate over residues 257–273; that stretch reads VKVKSPAKRASTRKAKK.

The protein belongs to the histone H1/H5 family.

The protein localises to the nucleus. Its subcellular location is the chromosome. Its function is as follows. Histones H1 are necessary for the condensation of nucleosome chains into higher-order structures. In Arabidopsis thaliana (Mouse-ear cress), this protein is Histone H1.2.